The sequence spans 414 residues: Multifunctional CCA protein (414 aa).

Glycine 8 and arginine 11 together coordinate ATP. CTP contacts are provided by glycine 8 and arginine 11. Mg(2+)-binding residues include aspartate 21 and aspartate 23. ATP-binding residues include arginine 91, arginine 137, and arginine 140. CTP-binding residues include arginine 91, arginine 137, and arginine 140. Residues 226-327 (TGVHVMMVVD…VTLFERCDAF (102 aa)) enclose the HD domain.

Belongs to the tRNA nucleotidyltransferase/poly(A) polymerase family. Bacterial CCA-adding enzyme type 1 subfamily. As to quaternary structure, monomer. Can also form homodimers and oligomers. Mg(2+) is required as a cofactor. Requires Ni(2+) as cofactor.

The catalysed reaction is a tRNA precursor + 2 CTP + ATP = a tRNA with a 3' CCA end + 3 diphosphate. It carries out the reaction a tRNA with a 3' CCA end + 2 CTP + ATP = a tRNA with a 3' CCACCA end + 3 diphosphate. Its function is as follows. Catalyzes the addition and repair of the essential 3'-terminal CCA sequence in tRNAs without using a nucleic acid template. Adds these three nucleotides in the order of C, C, and A to the tRNA nucleotide-73, using CTP and ATP as substrates and producing inorganic pyrophosphate. tRNA 3'-terminal CCA addition is required both for tRNA processing and repair. Also involved in tRNA surveillance by mediating tandem CCA addition to generate a CCACCA at the 3' terminus of unstable tRNAs. While stable tRNAs receive only 3'-terminal CCA, unstable tRNAs are marked with CCACCA and rapidly degraded. This chain is Multifunctional CCA protein, found in Herminiimonas arsenicoxydans.